We begin with the raw amino-acid sequence, 485 residues long: D-alanine--D-alanyl carrier protein ligase (485 aa).

144 to 145 is a binding site for ATP; that stretch reads TS. Asp-189 contacts D-alanine. 284-289 lines the ATP pocket; it reads NTYGPT. A D-alanine-binding site is contributed by Val-293. Residues Asp-365 and Lys-473 each coordinate ATP. Lys-473 serves as a coordination point for D-alanine.

The protein belongs to the ATP-dependent AMP-binding enzyme family. DltA subfamily.

The protein localises to the cytoplasm. The enzyme catalyses holo-[D-alanyl-carrier protein] + D-alanine + ATP = D-alanyl-[D-alanyl-carrier protein] + AMP + diphosphate. It participates in cell wall biogenesis; lipoteichoic acid biosynthesis. Catalyzes the first step in the D-alanylation of lipoteichoic acid (LTA), the activation of D-alanine and its transfer onto the D-alanyl carrier protein (Dcp) DltC. In an ATP-dependent two-step reaction, forms a high energy D-alanyl-AMP intermediate, followed by transfer of the D-alanyl residue as a thiol ester to the phosphopantheinyl prosthetic group of the Dcp. D-alanylation of LTA plays an important role in modulating the properties of the cell wall in Gram-positive bacteria, influencing the net charge of the cell wall. The protein is D-alanine--D-alanyl carrier protein ligase of Staphylococcus aureus (strain USA300).